The primary structure comprises 311 residues: Acetyl-coenzyme A carboxylase carboxyl transferase subunit alpha (311 aa).

The CoA carboxyltransferase C-terminal domain maps to 36–286 (NLDKEVSKIF…GEYFLSELKK (251 aa)).

The protein belongs to the AccA family. In terms of assembly, acetyl-CoA carboxylase is a heterohexamer composed of biotin carboxyl carrier protein (AccB), biotin carboxylase (AccC) and two subunits each of ACCase subunit alpha (AccA) and ACCase subunit beta (AccD).

The protein resides in the cytoplasm. The enzyme catalyses N(6)-carboxybiotinyl-L-lysyl-[protein] + acetyl-CoA = N(6)-biotinyl-L-lysyl-[protein] + malonyl-CoA. It functions in the pathway lipid metabolism; malonyl-CoA biosynthesis; malonyl-CoA from acetyl-CoA: step 1/1. Component of the acetyl coenzyme A carboxylase (ACC) complex. First, biotin carboxylase catalyzes the carboxylation of biotin on its carrier protein (BCCP) and then the CO(2) group is transferred by the carboxyltransferase to acetyl-CoA to form malonyl-CoA. This is Acetyl-coenzyme A carboxylase carboxyl transferase subunit alpha from Sulfurimonas denitrificans (strain ATCC 33889 / DSM 1251) (Thiomicrospira denitrificans (strain ATCC 33889 / DSM 1251)).